Reading from the N-terminus, the 247-residue chain is Triosephosphate isomerase (247 aa).

Substrate is bound at residue 9-11; it reads NWK. The active-site Electrophile is His-93. The Proton acceptor role is filled by Glu-163. Residues Gly-169, Ser-209, and 230–231 each bind substrate; that span reads GG.

Belongs to the triosephosphate isomerase family. As to quaternary structure, homodimer.

The protein localises to the cytoplasm. It carries out the reaction D-glyceraldehyde 3-phosphate = dihydroxyacetone phosphate. It participates in carbohydrate biosynthesis; gluconeogenesis. Its pathway is carbohydrate degradation; glycolysis; D-glyceraldehyde 3-phosphate from glycerone phosphate: step 1/1. Involved in the gluconeogenesis. Catalyzes stereospecifically the conversion of dihydroxyacetone phosphate (DHAP) to D-glyceraldehyde-3-phosphate (G3P). This chain is Triosephosphate isomerase, found in Dinoroseobacter shibae (strain DSM 16493 / NCIMB 14021 / DFL 12).